The following is a 122-amino-acid chain: Large ribosomal subunit protein uL14 (122 aa).

Belongs to the universal ribosomal protein uL14 family. Part of the 50S ribosomal subunit. Forms a cluster with proteins L3 and L19. In the 70S ribosome, L14 and L19 interact and together make contacts with the 16S rRNA in bridges B5 and B8.

Its function is as follows. Binds to 23S rRNA. Forms part of two intersubunit bridges in the 70S ribosome. This chain is Large ribosomal subunit protein uL14, found in Orientia tsutsugamushi (strain Ikeda) (Rickettsia tsutsugamushi).